The following is a 184-amino-acid chain: ATP synthase subunit b, chloroplastic (184 aa).

Residues leucine 27 to leucine 49 traverse the membrane as a helical segment.

Belongs to the ATPase B chain family. As to quaternary structure, F-type ATPases have 2 components, F(1) - the catalytic core - and F(0) - the membrane proton channel. F(1) has five subunits: alpha(3), beta(3), gamma(1), delta(1), epsilon(1). F(0) has four main subunits: a(1), b(1), b'(1) and c(10-14). The alpha and beta chains form an alternating ring which encloses part of the gamma chain. F(1) is attached to F(0) by a central stalk formed by the gamma and epsilon chains, while a peripheral stalk is formed by the delta, b and b' chains.

Its subcellular location is the plastid. The protein localises to the chloroplast thylakoid membrane. Functionally, f(1)F(0) ATP synthase produces ATP from ADP in the presence of a proton or sodium gradient. F-type ATPases consist of two structural domains, F(1) containing the extramembraneous catalytic core and F(0) containing the membrane proton channel, linked together by a central stalk and a peripheral stalk. During catalysis, ATP synthesis in the catalytic domain of F(1) is coupled via a rotary mechanism of the central stalk subunits to proton translocation. Component of the F(0) channel, it forms part of the peripheral stalk, linking F(1) to F(0). The chain is ATP synthase subunit b, chloroplastic from Jasminum nudiflorum (Winter jasmine).